A 75-amino-acid polypeptide reads, in one-letter code: Small ribosomal subunit protein bS18 (75 aa).

It belongs to the bacterial ribosomal protein bS18 family. In terms of assembly, part of the 30S ribosomal subunit. Forms a tight heterodimer with protein bS6.

Functionally, binds as a heterodimer with protein bS6 to the central domain of the 16S rRNA, where it helps stabilize the platform of the 30S subunit. This is Small ribosomal subunit protein bS18 from Psychromonas ingrahamii (strain DSM 17664 / CCUG 51855 / 37).